The chain runs to 591 residues: Aspartate--tRNA(Asp/Asn) ligase (591 aa).

Glu176 is an L-aspartate binding site. The aspartate stretch occupies residues 200–203 (QLFK). Arg222 contributes to the L-aspartate binding site. Residues 222-224 (RDE) and Gln231 each bind ATP. His450 serves as a coordination point for L-aspartate. Glu484 is an ATP binding site. L-aspartate is bound at residue Arg491. 536-539 (GLDR) serves as a coordination point for ATP.

It belongs to the class-II aminoacyl-tRNA synthetase family. Type 1 subfamily. In terms of assembly, homodimer.

The protein localises to the cytoplasm. It carries out the reaction tRNA(Asx) + L-aspartate + ATP = L-aspartyl-tRNA(Asx) + AMP + diphosphate. In terms of biological role, aspartyl-tRNA synthetase with relaxed tRNA specificity since it is able to aspartylate not only its cognate tRNA(Asp) but also tRNA(Asn). Reaction proceeds in two steps: L-aspartate is first activated by ATP to form Asp-AMP and then transferred to the acceptor end of tRNA(Asp/Asn). The chain is Aspartate--tRNA(Asp/Asn) ligase from Bacillus thuringiensis (strain Al Hakam).